A 132-amino-acid polypeptide reads, in one-letter code: Phosphoribosyl-AMP cyclohydrolase (132 aa).

Mg(2+) is bound at residue Asp85. Cys86 is a binding site for Zn(2+). Mg(2+) is bound by residues Asp87 and Asp89. Zn(2+) is bound by residues Cys102 and Cys109.

It belongs to the PRA-CH family. Homodimer. Requires Mg(2+) as cofactor. The cofactor is Zn(2+).

It localises to the cytoplasm. It catalyses the reaction 1-(5-phospho-beta-D-ribosyl)-5'-AMP + H2O = 1-(5-phospho-beta-D-ribosyl)-5-[(5-phospho-beta-D-ribosylamino)methylideneamino]imidazole-4-carboxamide. Its pathway is amino-acid biosynthesis; L-histidine biosynthesis; L-histidine from 5-phospho-alpha-D-ribose 1-diphosphate: step 3/9. Its function is as follows. Catalyzes the hydrolysis of the adenine ring of phosphoribosyl-AMP. This chain is Phosphoribosyl-AMP cyclohydrolase, found in Frankia alni (strain DSM 45986 / CECT 9034 / ACN14a).